The chain runs to 562 residues: Phosphoglucomutase-1 (562 aa).

N-acetylmethionine is present on Met-1. Residue Lys-16 is modified to N6-acetyllysine. Position 23 (Arg-23) interacts with alpha-D-glucose 1,6-bisphosphate. At Thr-115 the chain carries Phosphothreonine. Ser-117 contributes to the alpha-D-glucose 1,6-bisphosphate binding site. Ser-117 serves as the catalytic Phosphoserine intermediate. A Mg(2+)-binding site is contributed by Ser-117. Residues Ser-117 and Ser-134 each carry the phosphoserine modification. Thr-185 is subject to Phosphothreonine. 2 positions are modified to phosphoserine: Ser-206 and Ser-213. Asp-288, Asp-290, and Asp-292 together coordinate Mg(2+). Residues Asp-292 and Arg-293 each contribute to the alpha-D-glucose 1,6-bisphosphate site. An N6-acetyllysine modification is found at Lys-349. Tyr-353 is subject to Phosphotyrosine. Thr-357 contacts alpha-D-glucose 1,6-bisphosphate. Ser-369 is subject to Phosphoserine. Residues Glu-376, Ser-378, and Lys-389 each coordinate alpha-D-glucose 1,6-bisphosphate. Residue Ser-378 is modified to Phosphoserine. Lys-419 bears the N6-succinyllysine mark. Phosphothreonine; by PAK1 is present on Thr-467. Phosphoserine occurs at positions 477, 485, and 505. Position 507 is a phosphothreonine (Thr-507). A phosphoserine mark is found at Ser-509 and Ser-541.

Belongs to the phosphohexose mutase family. As to quaternary structure, monomer. The cofactor is Mg(2+). Post-translationally, phosphorylation at Thr-467 by PAK1 significantly enhances enzymatic activity.

It is found in the cytoplasm. It carries out the reaction alpha-D-glucose 1-phosphate = alpha-D-glucose 6-phosphate. It catalyses the reaction O-phospho-L-seryl-[protein] + alpha-D-glucose 1-phosphate = alpha-D-glucose 1,6-bisphosphate + L-seryl-[protein]. The catalysed reaction is alpha-D-glucose 1,6-bisphosphate + L-seryl-[protein] = O-phospho-L-seryl-[protein] + alpha-D-glucose 6-phosphate. In terms of biological role, catalyzes the reversible isomerization of alpha-D-glucose 1-phosphate to alpha-D-glucose 6-phosphate. The mechanism proceeds via the intermediate compound alpha-D-glucose 1,6-bisphosphate. This enzyme participates in both the breakdown and synthesis of glucose. The polypeptide is Phosphoglucomutase-1 (PGM1) (Macaca fascicularis (Crab-eating macaque)).